Here is a 358-residue protein sequence, read N- to C-terminus: UDP-N-acetylglucosamine--N-acetylmuramyl-(pentapeptide) pyrophosphoryl-undecaprenol N-acetylglucosamine transferase (358 aa).

UDP-N-acetyl-alpha-D-glucosamine contacts are provided by residues 11-13, N120, R161, S188, and Q282; that span reads TGG.

Belongs to the glycosyltransferase 28 family. MurG subfamily.

Its subcellular location is the cell inner membrane. It carries out the reaction di-trans,octa-cis-undecaprenyl diphospho-N-acetyl-alpha-D-muramoyl-L-alanyl-D-glutamyl-meso-2,6-diaminopimeloyl-D-alanyl-D-alanine + UDP-N-acetyl-alpha-D-glucosamine = di-trans,octa-cis-undecaprenyl diphospho-[N-acetyl-alpha-D-glucosaminyl-(1-&gt;4)]-N-acetyl-alpha-D-muramoyl-L-alanyl-D-glutamyl-meso-2,6-diaminopimeloyl-D-alanyl-D-alanine + UDP + H(+). It functions in the pathway cell wall biogenesis; peptidoglycan biosynthesis. Its function is as follows. Cell wall formation. Catalyzes the transfer of a GlcNAc subunit on undecaprenyl-pyrophosphoryl-MurNAc-pentapeptide (lipid intermediate I) to form undecaprenyl-pyrophosphoryl-MurNAc-(pentapeptide)GlcNAc (lipid intermediate II). The sequence is that of UDP-N-acetylglucosamine--N-acetylmuramyl-(pentapeptide) pyrophosphoryl-undecaprenol N-acetylglucosamine transferase from Synechococcus sp. (strain CC9902).